Consider the following 448-residue polypeptide: Phosphohexose mutases (448 aa).

The active-site Phosphoserine intermediate is the Ser-97. Residues Ser-97, Asp-237, Asp-239, and Asp-241 each contribute to the Mg(2+) site.

It belongs to the phosphohexose mutase family. The cofactor is Mg(2+).

It carries out the reaction alpha-D-glucose 1-phosphate = alpha-D-glucose 6-phosphate. The enzyme catalyses alpha-D-mannose 1-phosphate = D-mannose 6-phosphate. It functions in the pathway nucleotide-sugar biosynthesis; GDP-alpha-D-mannose biosynthesis; alpha-D-mannose 1-phosphate from D-fructose 6-phosphate: step 2/2. Functionally, involved in xanthan production. This chain is Phosphohexose mutases (xanA), found in Xanthomonas campestris pv. campestris (strain ATCC 33913 / DSM 3586 / NCPPB 528 / LMG 568 / P 25).